A 276-amino-acid chain; its full sequence is Undecaprenyl-diphosphatase (276 aa).

Helical transmembrane passes span 48-68, 92-112, 119-139, 155-175, 196-216, 229-249, and 255-275; these read AANS…AIVF, LTIA…FLFE, LFSV…MLIA, ITYK…WPGF, ADFT…LKLV, FFLV…KFFL, and IKLV…IMLV.

This sequence belongs to the UppP family.

Its subcellular location is the cell membrane. It carries out the reaction di-trans,octa-cis-undecaprenyl diphosphate + H2O = di-trans,octa-cis-undecaprenyl phosphate + phosphate + H(+). Catalyzes the dephosphorylation of undecaprenyl diphosphate (UPP). Confers resistance to bacitracin. This Bacillus velezensis (strain DSM 23117 / BGSC 10A6 / LMG 26770 / FZB42) (Bacillus amyloliquefaciens subsp. plantarum) protein is Undecaprenyl-diphosphatase.